Consider the following 443-residue polypeptide: ATP-dependent protease ATPase subunit HslU (443 aa).

Residues I18, 60–65 (GVGKTE), D256, E321, and R393 contribute to the ATP site.

This sequence belongs to the ClpX chaperone family. HslU subfamily. As to quaternary structure, a double ring-shaped homohexamer of HslV is capped on each side by a ring-shaped HslU homohexamer. The assembly of the HslU/HslV complex is dependent on binding of ATP.

Its subcellular location is the cytoplasm. ATPase subunit of a proteasome-like degradation complex; this subunit has chaperone activity. The binding of ATP and its subsequent hydrolysis by HslU are essential for unfolding of protein substrates subsequently hydrolyzed by HslV. HslU recognizes the N-terminal part of its protein substrates and unfolds these before they are guided to HslV for hydrolysis. In Citrobacter koseri (strain ATCC BAA-895 / CDC 4225-83 / SGSC4696), this protein is ATP-dependent protease ATPase subunit HslU.